Reading from the N-terminus, the 239-residue chain is 1-(5-phosphoribosyl)-5-[(5-phosphoribosylamino)methylideneamino] imidazole-4-carboxamide isomerase (239 aa).

Asp8 functions as the Proton acceptor in the catalytic mechanism. Asp129 functions as the Proton donor in the catalytic mechanism.

Belongs to the HisA/HisF family.

It is found in the cytoplasm. The catalysed reaction is 1-(5-phospho-beta-D-ribosyl)-5-[(5-phospho-beta-D-ribosylamino)methylideneamino]imidazole-4-carboxamide = 5-[(5-phospho-1-deoxy-D-ribulos-1-ylimino)methylamino]-1-(5-phospho-beta-D-ribosyl)imidazole-4-carboxamide. It functions in the pathway amino-acid biosynthesis; L-histidine biosynthesis; L-histidine from 5-phospho-alpha-D-ribose 1-diphosphate: step 4/9. The protein is 1-(5-phosphoribosyl)-5-[(5-phosphoribosylamino)methylideneamino] imidazole-4-carboxamide isomerase of Bacillus cereus (strain G9842).